The sequence spans 236 residues: 5'-methylthioadenosine/S-adenosylhomocysteine nucleosidase (236 aa).

Catalysis depends on E12, which acts as the Proton acceptor. Substrate is bound by residues G78, I153, and 174–175 (ME). D198 serves as the catalytic Proton donor.

The protein belongs to the PNP/UDP phosphorylase family. MtnN subfamily.

It carries out the reaction S-adenosyl-L-homocysteine + H2O = S-(5-deoxy-D-ribos-5-yl)-L-homocysteine + adenine. It catalyses the reaction S-methyl-5'-thioadenosine + H2O = 5-(methylsulfanyl)-D-ribose + adenine. The enzyme catalyses 5'-deoxyadenosine + H2O = 5-deoxy-D-ribose + adenine. It participates in amino-acid biosynthesis; L-methionine biosynthesis via salvage pathway; S-methyl-5-thio-alpha-D-ribose 1-phosphate from S-methyl-5'-thioadenosine (hydrolase route): step 1/2. In terms of biological role, catalyzes the irreversible cleavage of the glycosidic bond in both 5'-methylthioadenosine (MTA) and S-adenosylhomocysteine (SAH/AdoHcy) to adenine and the corresponding thioribose, 5'-methylthioribose and S-ribosylhomocysteine, respectively. Also cleaves 5'-deoxyadenosine, a toxic by-product of radical S-adenosylmethionine (SAM) enzymes, into 5-deoxyribose and adenine. The sequence is that of 5'-methylthioadenosine/S-adenosylhomocysteine nucleosidase from Shewanella baltica (strain OS223).